The chain runs to 122 residues: Large ribosomal subunit protein uL14 (122 aa).

It belongs to the universal ribosomal protein uL14 family. As to quaternary structure, part of the 50S ribosomal subunit. Forms a cluster with proteins L3 and L19. In the 70S ribosome, L14 and L19 interact and together make contacts with the 16S rRNA in bridges B5 and B8.

Functionally, binds to 23S rRNA. Forms part of two intersubunit bridges in the 70S ribosome. The sequence is that of Large ribosomal subunit protein uL14 from Shewanella woodyi (strain ATCC 51908 / MS32).